Reading from the N-terminus, the 279-residue chain is Plasmodesmata-located protein 8 (279 aa).

A signal peptide spans 1–20; that stretch reads MRRLFLFSLLFLFFYSSSSS. Over 21 to 253 the chain is Extracellular; sequence RSSSESHIFI…PTNGDHVGKS (233 aa). 2 Gnk2-homologous domains span residues 27 to 135 and 137 to 237; these read HIFI…TNDF and GKPD…GSGY. 6 disulfides stabilise this stretch: Cys-34-Cys-113, Cys-89-Cys-98, Cys-101-Cys-126, Cys-148-Cys-215, Cys-191-Cys-200, and Cys-203-Cys-228. The helical transmembrane segment at 254 to 274 threads the bilayer; that stretch reads IAIIVGVIAGFAILVVLLSLC. Positions 254–274 are necessary and sufficient for plasmodesmal targeting; that stretch reads IAIIVGVIAGFAILVVLLSLC. Residues 275-279 lie on the Cytoplasmic side of the membrane; the sequence is RNSMH.

The protein belongs to the cysteine-rich repeat secretory protein family. Plasmodesmata-located proteins (PDLD) subfamily. In terms of assembly, interacts with ACBP6; interaction occurs at the plasma membrane. As to quaternary structure, (Microbial infection) Interacts with Grapevine fanleaf virus (GFLV) 2B-MP. Highly expressed in pollen, lateral root and elongation zone. Higher expression in the reproductive tissues (flowers and buds) than in vegetative organs (leaves and stems). High expression in shoot and root phloem companion cells (at protein level).

It localises to the cell membrane. Its subcellular location is the cell junction. The protein resides in the plasmodesma. Its function is as follows. Modulates cell-to-cell trafficking. This chain is Plasmodesmata-located protein 8, found in Arabidopsis thaliana (Mouse-ear cress).